The sequence spans 155 residues: Egg cell-secreted protein 1.5 (155 aa).

A signal peptide spans 1 to 32; the sequence is MATKSTSKPLLLSFLMMSYLISTFHVITVAEG.

It belongs to the plant egg cell-secreted peptide family. In terms of tissue distribution, restricted to female reproductive tissues, specifically accumulating in storage vesicles of the unfertilized egg cell.

The protein resides in the cytoplasmic vesicle. It localises to the secreted. Involved in the regulation of gamete interactions during the double fertilization and to prevent multiple-pollen tube attraction; mediates the redistribution of the gamete fusogen HAP2/GCS1 to the cell surface after secretion upon sperm arrival. The protein is Egg cell-secreted protein 1.5 (EC1.5) of Arabidopsis thaliana (Mouse-ear cress).